Reading from the N-terminus, the 139-residue chain is uncharacterized protein (139 aa).

Residues 54–75 (NSLHRHGDQAWGKHRRQNSLKS) are disordered.

This is an uncharacterized protein from Homo sapiens (Human).